A 185-amino-acid polypeptide reads, in one-letter code: Ribonuclease M5 (185 aa).

The Toprim domain maps to K3–G84. Residues E9, D55, and D57 each coordinate Mg(2+).

This sequence belongs to the ribonuclease M5 family. Requires Mg(2+) as cofactor.

The protein resides in the cytoplasm. The catalysed reaction is Endonucleolytic cleavage of RNA, removing 21 and 42 nucleotides, respectively, from the 5'- and 3'-termini of a 5S-rRNA precursor.. Required for correct processing of both the 5' and 3' ends of 5S rRNA precursor. Cleaves both sides of a double-stranded region yielding mature 5S rRNA in one step. The chain is Ribonuclease M5 from Clostridium acetobutylicum (strain ATCC 824 / DSM 792 / JCM 1419 / IAM 19013 / LMG 5710 / NBRC 13948 / NRRL B-527 / VKM B-1787 / 2291 / W).